The sequence spans 299 residues: GTPase Era (299 aa).

An Era-type G domain is found at 5-175; the sequence is RSGFVCFVGR…TDVLAGKLPP (171 aa). A G1 region spans residues 13-20; the sequence is GRPNTGKS. 13-20 lines the GTP pocket; sequence GRPNTGKS. The G2 stretch occupies residues 39-43; the sequence is QTTRH. Positions 60–63 are G3; the sequence is DTPG. Residues 60–64 and 124–127 each bind GTP; these read DTPGL and TKID. A G4 region spans residues 124–127; that stretch reads TKID. Residues 154 to 156 are G5; sequence VSA. The region spanning 206–285 is the KH type-2 domain; that stretch reads VRDELPHSLA…YLDLRVKIAK (80 aa).

It belongs to the TRAFAC class TrmE-Era-EngA-EngB-Septin-like GTPase superfamily. Era GTPase family. Monomer.

The protein localises to the cell envelope. The protein resides in the secreted. Its subcellular location is the cell wall. Exhibits GTPase activity. Binds RNA but is probably not involved in ribosome assembly in mycobacteria. In Mycobacterium sp. (strain JLS), this protein is GTPase Era.